A 260-amino-acid chain; its full sequence is Proteasome assembly chaperone 2 (260 aa).

The protein belongs to the PSMG2 family. As to quaternary structure, forms a heterodimer with psmg1. Degraded by the proteasome upon completion of 20S proteasome maturation.

The protein resides in the nucleus. In terms of biological role, chaperone protein which promotes assembly of the 20S proteasome as part of a heterodimer with psmg1. The sequence is that of Proteasome assembly chaperone 2 from Danio rerio (Zebrafish).